The following is a 292-amino-acid chain: Elongation factor Ts (292 aa).

Residues 80 to 83 (TDFV) are involved in Mg(2+) ion dislocation from EF-Tu.

Belongs to the EF-Ts family.

It is found in the cytoplasm. In terms of biological role, associates with the EF-Tu.GDP complex and induces the exchange of GDP to GTP. It remains bound to the aminoacyl-tRNA.EF-Tu.GTP complex up to the GTP hydrolysis stage on the ribosome. This chain is Elongation factor Ts, found in Oenococcus oeni (strain ATCC BAA-331 / PSU-1).